Reading from the N-terminus, the 103-residue chain is UPF0235 protein RHECIAT_CH0004196 (103 aa).

Belongs to the UPF0235 family.

The protein is UPF0235 protein RHECIAT_CH0004196 of Rhizobium etli (strain CIAT 652).